The primary structure comprises 102 residues: Small ribosomal subunit protein uS10 (102 aa).

Positions 34–61 are disordered; that stretch reads MAGPIPLPTKTLKVTTRKSTDGEGSSSF.

This sequence belongs to the universal ribosomal protein uS10 family. In terms of assembly, part of the 30S ribosomal subunit.

Involved in the binding of tRNA to the ribosomes. The protein is Small ribosomal subunit protein uS10 of Methanococcus aeolicus (strain ATCC BAA-1280 / DSM 17508 / OCM 812 / Nankai-3).